The chain runs to 422 residues: MLDVKYIRNNPDEARKACVQKGEDDHVDEILKYDEQRRKILTDLEVLKNKRNTVSKEIGQLKKEGHDAQDKIAEMKEVSDKVKEMDDELKKVDEQLNYHLLCIPNIPNPDVPVGDDDEDNQVVKQVGEPVKKDYFKPHWEVAENLNLLDFKRAGKVTGTRFVNYVGDAARLERALIDFMIDVHVTEHGYVEMMPPFIANRDSMTGTGQLPKFEDDMYKLEDMEYFLIPTAEVTLTNLYRDEILPGDFLPRYLVAFTPCFRKEAGAHGRDTRGLIRQHQFNKVEMVKFVEPEKSYQELDSLVANAERVLQLLELPYQISLMCTGDLGFAAAKKYDLEVWLPSYDTYREISSCSNFEDFQARRANIRYRPEEGEKARFVHTLNGSGLAVGRTLAAILENYQNPDGTVTIPEVLKPYFNGRDVIS.

Residue threonine 229–glutamate 231 participates in L-serine binding. Arginine 260–glutamate 262 is an ATP binding site. Position 283 (glutamate 283) interacts with L-serine. Glutamate 347–serine 350 is a binding site for ATP. L-serine is bound at residue serine 383.

Belongs to the class-II aminoacyl-tRNA synthetase family. Type-1 seryl-tRNA synthetase subfamily. As to quaternary structure, homodimer. The tRNA molecule binds across the dimer.

It is found in the cytoplasm. The catalysed reaction is tRNA(Ser) + L-serine + ATP = L-seryl-tRNA(Ser) + AMP + diphosphate + H(+). The enzyme catalyses tRNA(Sec) + L-serine + ATP = L-seryl-tRNA(Sec) + AMP + diphosphate + H(+). The protein operates within aminoacyl-tRNA biosynthesis; selenocysteinyl-tRNA(Sec) biosynthesis; L-seryl-tRNA(Sec) from L-serine and tRNA(Sec): step 1/1. In terms of biological role, catalyzes the attachment of serine to tRNA(Ser). Is also able to aminoacylate tRNA(Sec) with serine, to form the misacylated tRNA L-seryl-tRNA(Sec), which will be further converted into selenocysteinyl-tRNA(Sec). This is Serine--tRNA ligase from Natranaerobius thermophilus (strain ATCC BAA-1301 / DSM 18059 / JW/NM-WN-LF).